Here is a 419-residue protein sequence, read N- to C-terminus: E3 ubiquitin-protein ligase pellino homolog 2 (419 aa).

The FHA; atypical domain maps to 15–202; the sequence is EPVKYRELVV…HPQGGFTEES (188 aa).

It belongs to the pellino family. In terms of assembly, interacts with TRAF6, IRAK4 and MAP3K7. Interacts with IRAK1. Interacts with BCL10; this interaction is impaired by SOCS3. Post-translationally, phosphorylated by IRAK1 and IRAK4 enhancing its E3 ligase activity. Widely expressed both in embryos and adult. Weakly or not expressed in spleen and thymus.

It catalyses the reaction S-ubiquitinyl-[E2 ubiquitin-conjugating enzyme]-L-cysteine + [acceptor protein]-L-lysine = [E2 ubiquitin-conjugating enzyme]-L-cysteine + N(6)-ubiquitinyl-[acceptor protein]-L-lysine.. It participates in protein modification; protein ubiquitination. Functionally, E3 ubiquitin ligase catalyzing the covalent attachment of ubiquitin moieties onto substrate proteins. Involved in the TLR and IL-1 signaling pathways via interaction with the complex containing IRAK kinases and TRAF6. Mediates IL1B-induced IRAK1 'Lys-63'-linked polyubiquitination and possibly 'Lys-48'-linked ubiquitination. May be important for LPS- and IL1B-induced MAP3K7-dependent, but not MAP3K3-dependent, NF-kappa-B activation. Can activate the MAP (mitogen activated protein) kinase pathway leading to activation of ELK1. This Mus musculus (Mouse) protein is E3 ubiquitin-protein ligase pellino homolog 2 (Peli2).